The primary structure comprises 281 residues: Bifunctional protein FolD (281 aa).

NADP(+) is bound at residue 163–165 (GRS).

The protein belongs to the tetrahydrofolate dehydrogenase/cyclohydrolase family. In terms of assembly, homodimer.

The catalysed reaction is (6R)-5,10-methylene-5,6,7,8-tetrahydrofolate + NADP(+) = (6R)-5,10-methenyltetrahydrofolate + NADPH. It catalyses the reaction (6R)-5,10-methenyltetrahydrofolate + H2O = (6R)-10-formyltetrahydrofolate + H(+). Its pathway is one-carbon metabolism; tetrahydrofolate interconversion. In terms of biological role, catalyzes the oxidation of 5,10-methylenetetrahydrofolate to 5,10-methenyltetrahydrofolate and then the hydrolysis of 5,10-methenyltetrahydrofolate to 10-formyltetrahydrofolate. This chain is Bifunctional protein FolD, found in Leuconostoc mesenteroides subsp. mesenteroides (strain ATCC 8293 / DSM 20343 / BCRC 11652 / CCM 1803 / JCM 6124 / NCDO 523 / NBRC 100496 / NCIMB 8023 / NCTC 12954 / NRRL B-1118 / 37Y).